Here is a 249-residue protein sequence, read N- to C-terminus: MKIIFTKVLFDNYVWIMFNSSKDCIIIDPGESNSVIKKIKKLNLNPKIILLTHNHLDHIQGVKNLLYKYPEISIYGPLETQFCGTKNLIDNRNTIEILNTKFYIIPTPGHTNGHTAYYCPPFLFCGDSIFSGGCGRVKNGMMIKMYNSLRTISKLPNDTLIYCSHEYTRSNLEFFKKIFPKNLNILNYYNNIKKSKTQCTLPSTLKIEKKINPFLQLNNTNLRHQVKIHNDLSFSLNFFIYLRKIKDKS.

Zn(2+)-binding residues include His53, His55, Asp57, His58, His110, Asp127, and His165.

The protein belongs to the metallo-beta-lactamase superfamily. Glyoxalase II family. As to quaternary structure, monomer. It depends on Zn(2+) as a cofactor.

The catalysed reaction is an S-(2-hydroxyacyl)glutathione + H2O = a 2-hydroxy carboxylate + glutathione + H(+). It participates in secondary metabolite metabolism; methylglyoxal degradation; (R)-lactate from methylglyoxal: step 2/2. In terms of biological role, thiolesterase that catalyzes the hydrolysis of S-D-lactoyl-glutathione to form glutathione and D-lactic acid. The polypeptide is Hydroxyacylglutathione hydrolase (Buchnera aphidicola subsp. Baizongia pistaciae (strain Bp)).